Consider the following 283-residue polypeptide: Pantothenate synthetase (283 aa).

30–37 serves as a coordination point for ATP; sequence MGNLHAGH. His37 acts as the Proton donor in catalysis. A (R)-pantoate-binding site is contributed by Gln61. A beta-alanine-binding site is contributed by Gln61. 149–152 provides a ligand contact to ATP; the sequence is GEKD. Gln155 is a (R)-pantoate binding site. ATP-binding positions include Val178 and 186-189; that span reads LSSR.

Belongs to the pantothenate synthetase family. As to quaternary structure, homodimer.

Its subcellular location is the cytoplasm. The enzyme catalyses (R)-pantoate + beta-alanine + ATP = (R)-pantothenate + AMP + diphosphate + H(+). It participates in cofactor biosynthesis; (R)-pantothenate biosynthesis; (R)-pantothenate from (R)-pantoate and beta-alanine: step 1/1. In terms of biological role, catalyzes the condensation of pantoate with beta-alanine in an ATP-dependent reaction via a pantoyl-adenylate intermediate. This is Pantothenate synthetase from Pseudomonas aeruginosa (strain UCBPP-PA14).